The primary structure comprises 75 residues: MSRICQITGKKRMIGNNRSHALNATKRKFLINIQYHRFWIADEKRFIKLHVSTNGMRYIDKKGIETVIRKINMKK.

This sequence belongs to the bacterial ribosomal protein bL28 family.

In Buchnera aphidicola subsp. Acyrthosiphon pisum (strain APS) (Acyrthosiphon pisum symbiotic bacterium), this protein is Large ribosomal subunit protein bL28.